The sequence spans 490 residues: GTPase Der (490 aa).

Residues M1–L165 form the EngA-type G 1 domain. GTP-binding positions include G7–S14, D54–V58, and N117–D120. A disordered region spans residues L165–S184. Positions E169–E178 are enriched in acidic residues. Residues L227–T400 enclose the EngA-type G 2 domain. GTP-binding positions include G233–S240, D280–L284, and N345–D348. Residues T401–P485 enclose the KH-like domain.

Belongs to the TRAFAC class TrmE-Era-EngA-EngB-Septin-like GTPase superfamily. EngA (Der) GTPase family. As to quaternary structure, associates with the 50S ribosomal subunit.

GTPase that plays an essential role in the late steps of ribosome biogenesis. The sequence is that of GTPase Der from Chlamydia muridarum (strain MoPn / Nigg).